Here is a 311-residue protein sequence, read N- to C-terminus: Dehydrogenase/reductase SDR family member 7C (311 aa).

Positions methionine 1–glycine 18 are cleaved as a signal peptide. NAD(+) is bound by residues serine 47, leucine 49, tyrosine 191, lysine 195, and serine 226. Tyrosine 191 acts as the Proton acceptor in catalysis.

The protein belongs to the short-chain dehydrogenases/reductases (SDR) family.

Its subcellular location is the sarcoplasmic reticulum membrane. It catalyses the reaction all-trans-retinol + NAD(+) = all-trans-retinal + NADH + H(+). Its function is as follows. NADH-dependent oxidoreductase which catalyzes the oxidation of all-trans-retinol to all-trans-retinal. Plays a role in the regulation of cardiac and skeletal muscle metabolic functions. Maintains Ca(2+) intracellular homeostasis by repressing Ca(2+) release from the sarcoplasmic reticulum (SR) in myotubes, possibly through local alternations in NAD/NADH or retinol/retinal. Also plays a role in Ca(2+) homeostasis by controlling Ca(2+) overload in the cytosol and the SR in myotubes. Involved in glucose uptake into skeletal muscles and muscle performance by activating PI3K and mTORC2-mediated AKT1 phosphorylation signaling pathways, possibly through the action of its downstream catalytic product all-trans-retinoic acid. In Bos taurus (Bovine), this protein is Dehydrogenase/reductase SDR family member 7C (DHRS7C).